Reading from the N-terminus, the 317-residue chain is Glutathione synthetase (317 aa).

The ATP-grasp domain occupies 124–310 (EKLFTAWFPE…ITGKLMDAIE (187 aa)). ATP is bound at residue 150–207 (FRQEHGDIILKPLDGMGGASIFRVKENDPNVSVIIETLTNHGQNYAMAQTFVPDISNG). Mg(2+) contacts are provided by Glu281 and Asn283.

The protein belongs to the prokaryotic GSH synthase family. It depends on Mg(2+) as a cofactor. Mn(2+) serves as cofactor.

The catalysed reaction is gamma-L-glutamyl-L-cysteine + glycine + ATP = glutathione + ADP + phosphate + H(+). It functions in the pathway sulfur metabolism; glutathione biosynthesis; glutathione from L-cysteine and L-glutamate: step 2/2. This is Glutathione synthetase from Vibrio vulnificus (strain CMCP6).